The sequence spans 59 residues: Large ribosomal subunit protein bL32 (59 aa).

The interval 1 to 20 (MAVQQNKKSKSKKGMRRSHD) is disordered. Residues 7–19 (KKSKSKKGMRRSH) show a composition bias toward basic residues.

Belongs to the bacterial ribosomal protein bL32 family.

The polypeptide is Large ribosomal subunit protein bL32 (Nitratidesulfovibrio vulgaris (strain DSM 19637 / Miyazaki F) (Desulfovibrio vulgaris)).